The primary structure comprises 489 residues: CDK5RAP3 protein homolog (489 aa).

The protein belongs to the CDK5RAP3 family.

Functionally, substrate adapter of E3 ligase complexes mediating ufmylation, the covalent attachment of the ubiquitin-like modifier UFM1 to substrate proteins, and which is involved in various processes, such as ribosome recycling and reticulophagy (also called ER-phagy). The chain is CDK5RAP3 protein homolog from Caenorhabditis elegans.